A 787-amino-acid chain; its full sequence is MAVWIQAQQLQGDALHQMQALYGQHFPIEVRHYLSQWIEGQAWDSIDLDNPQENIKATQLLEGLVQELQKKAEHQVGEDGFLLKIKLGHYATQLQNTYDRCPMELVRCIRHILYNEQRLVREANNGTSPAGSLADAMSQKHLQINQTFEELRLVTQDTENELKKLQQTQEYFIIQYQESLRIQAQFAQLAQLNPQERLSRETALQQKQLSLEAWLQREAQTLQQYRVELAEKHQKTLQLLRKQQTIILDDELIQWKRRQQLAGNGGPPEGSLDVLQSWCEKLAEIIWQNRQQIRRAEHFCQQLPIPGPVEEMLAEVNATITDIISALVTSTFIIEKQPPQVLKTQTKFAATVRLLVGGKLNVHMNPPQVKATIISEQQAKSLLKNENTRNDYSGEILNNCCVMEYHQATGTLSAHFRNMSLKRIKRSDRRGAESVTEEKFTILFESQFSVGGNELVFQVKTLSLPVVVIVHGSQDNNATATVLWDNAFAEPGRVPFAVPDKVLWPQLCEALNMKFKAEVQSNRGLTKENLVFLAQKLFNSSSSHLEDYNGMSVSWSQFNRENLPGRNYTFWQWFDGVMEVLKKHLKPHWNDGAILGFVNKQQAHDLLINKPDGTFLLRFSDSEIGGITIAWKFDSQERMFWNLMPFTTRDFSIRSLADRLGDLSYLIYVFPDRPKDEVYSKYYTPVPCEPATAKAVDGYVKPQIKQVVPEFVSASADSAGGSATYMDQAPSPAVCPQPHYNMYPQNPDPVLDNDGDFDLDDTIDVARRVEELLGRPMDSQWIPHAQS.

Tyrosine 90 carries the phosphotyrosine modification. Serine 128 carries the post-translational modification Phosphoserine. One can recognise an SH2 domain in the interval 589 to 686; it reads WNDGAILGFV…EVYSKYYTPV (98 aa). Tyrosine 682 carries the phosphotyrosine modification. A Phosphotyrosine; by HCK, JAK and PTK6 modification is found at tyrosine 699.

Belongs to the transcription factor STAT family. In terms of assembly, upon activation, forms a homodimer or a heterodimer with a related family member. Binds NR3C1. Interacts with NCOA1. Interacts with NMI. Interacts with SOCS7. Interacts (via SH2 domain) with INSR. Interacts with CPEB3; this inhibits STAT5B-mediated transcriptional activation. Tyrosine phosphorylated in response to signaling via activated KIT, resulting in translocation to the nucleus. Tyrosine phosphorylated in response to signaling via activated FLT3; wild-type FLT3 results in much weaker phosphorylation than constitutively activated mutant FLT3. Alternatively, can be phosphorylated by JAK2. Phosphorylation at Tyr-699 by PTK6 or HCK leads to an increase of its transcriptional activity.

The protein resides in the cytoplasm. It is found in the nucleus. Functionally, carries out a dual function: signal transduction and activation of transcription. Mediates cellular responses to the cytokine KITLG/SCF and other growth factors. Binds to the GAS element and activates PRL-induced transcription. Positively regulates hematopoietic/erythroid differentiation. The protein is Signal transducer and activator of transcription 5B (STAT5B) of Bos taurus (Bovine).